Here is a 195-residue protein sequence, read N- to C-terminus: 3-isopropylmalate dehydratase small subunit (195 aa).

Belongs to the LeuD family. LeuD type 1 subfamily. As to quaternary structure, heterodimer of LeuC and LeuD.

The enzyme catalyses (2R,3S)-3-isopropylmalate = (2S)-2-isopropylmalate. It participates in amino-acid biosynthesis; L-leucine biosynthesis; L-leucine from 3-methyl-2-oxobutanoate: step 2/4. Catalyzes the isomerization between 2-isopropylmalate and 3-isopropylmalate, via the formation of 2-isopropylmaleate. The protein is 3-isopropylmalate dehydratase small subunit of Koribacter versatilis (strain Ellin345).